A 720-amino-acid chain; its full sequence is Fatty acid CoA ligase Acsl3 (720 aa).

Residues isoleucine 21–phenylalanine 41 traverse the membrane as a helical; Signal-anchor for type III membrane protein segment. Topologically, residues tyrosine 42–lysine 720 are cytoplasmic. Serine 683 bears the Phosphoserine mark.

The protein belongs to the ATP-dependent AMP-binding enzyme family. Mg(2+) serves as cofactor.

Its subcellular location is the mitochondrion outer membrane. It is found in the peroxisome membrane. The protein localises to the microsome membrane. It localises to the endoplasmic reticulum membrane. The catalysed reaction is a long-chain fatty acid + ATP + CoA = a long-chain fatty acyl-CoA + AMP + diphosphate. It catalyses the reaction (5Z,8Z,11Z,14Z)-eicosatetraenoate + ATP + CoA = (5Z,8Z,11Z,14Z)-eicosatetraenoyl-CoA + AMP + diphosphate. The enzyme catalyses (E)-hexadec-2-enoate + ATP + CoA = (2E)-hexadecenoyl-CoA + AMP + diphosphate. It carries out the reaction 15-hydroxy-(5Z,8Z,11Z,13E)-eicosatetraenoate + ATP + CoA = 15-hydroxy-(5Z,8Z,11Z,13E)-eicosatetraenoyl-CoA + AMP + diphosphate. The catalysed reaction is 12-hydroxy-(5Z,8Z,10E,14Z)-eicosatetraenoate + ATP + CoA = 12-hydroxy-(5Z,8Z,10E,14Z)-eicosatetraenoyl-CoA + AMP + diphosphate. It catalyses the reaction 5-hydroxy-(6E,8Z,11Z,14Z)-eicosatetraenoate + ATP + CoA = 5-hydroxy-(6E,8Z,11Z,14Z)-eicosatetraenoyl-CoA + AMP + diphosphate. The enzyme catalyses 14,15-epoxy-(5Z,8Z,11Z)-eicosatrienoate + ATP + CoA = 14,15-epoxy-(5Z,8Z,11Z)-eicosatrienoyl-CoA + AMP + diphosphate. It carries out the reaction 11,12-epoxy-(5Z,8Z,14Z)-eicosatrienoate + ATP + CoA = 11,12-epoxy-(5Z,8Z,14Z)-eicosatrienoyl-CoA + AMP + diphosphate. The catalysed reaction is a medium-chain fatty acid + ATP + CoA = a medium-chain fatty acyl-CoA + AMP + diphosphate. It catalyses the reaction hexadecanoate + ATP + CoA = hexadecanoyl-CoA + AMP + diphosphate. The enzyme catalyses tetradecanoate + ATP + CoA = tetradecanoyl-CoA + AMP + diphosphate. It carries out the reaction dodecanoate + ATP + CoA = dodecanoyl-CoA + AMP + diphosphate. The catalysed reaction is octadecanoate + ATP + CoA = octadecanoyl-CoA + AMP + diphosphate. It catalyses the reaction eicosanoate + ATP + CoA = eicosanoyl-CoA + AMP + diphosphate. The enzyme catalyses (9Z)-octadecenoate + ATP + CoA = (9Z)-octadecenoyl-CoA + AMP + diphosphate. It carries out the reaction (9Z)-hexadecenoate + ATP + CoA = (9Z)-hexadecenoyl-CoA + AMP + diphosphate. The catalysed reaction is (9Z,12Z)-octadecadienoate + ATP + CoA = (9Z,12Z)-octadecadienoyl-CoA + AMP + diphosphate. It catalyses the reaction (9Z,12Z,15Z)-octadecatrienoate + ATP + CoA = (9Z,12Z,15Z)-octadecatrienoyl-CoA + AMP + diphosphate. The enzyme catalyses (4Z,7Z,10Z,13Z,16Z,19Z)-docosahexaenoate + ATP + CoA = (4Z,7Z,10Z,13Z,16Z,19Z)-docosahexaenoyl-CoA + AMP + diphosphate. It carries out the reaction (5Z,8Z,11Z,14Z,17Z)-eicosapentaenoate + ATP + CoA = (5Z,8Z,11Z,14Z,17Z)-eicosapentaenoyl-CoA + AMP + diphosphate. The catalysed reaction is a fatty acid + ATP + CoA = a fatty acyl-CoA + AMP + diphosphate. Its function is as follows. Acyl-CoA synthetases (ACSL) activates long-chain fatty acids for both synthesis of cellular lipids, and degradation via beta-oxidation. Required for the incorporation of fatty acids into phosphatidylcholine, the major phospholipid located on the surface of VLDL (very low density lipoproteins). Has mainly an anabolic role in energy metabolism. Mediates hepatic lipogenesis. Preferentially uses myristate, laurate, arachidonate and eicosapentaenoate as substrates. Both isoforms exhibit the same level of activity. The chain is Fatty acid CoA ligase Acsl3 from Homo sapiens (Human).